The primary structure comprises 723 residues: Catalase-peroxidase (723 aa).

The signal sequence occupies residues 1 to 29 (MDGNDLVENKCPVMHGGITVAGHSNTAWW). The tryptophyl-tyrosyl-methioninium (Trp-Tyr) (with M-251) cross-link spans 97–225 (WHSAGSYRLA…LAAVQMGLIY (129 aa)). Residue His98 is the Proton acceptor of the active site. A cross-link (tryptophyl-tyrosyl-methioninium (Tyr-Met) (with W-97)) is located at residues 225–251 (YVNPEGVNGKSDPLKSAAQVRETFARM). His266 serves as a coordination point for heme b.

Belongs to the peroxidase family. Peroxidase/catalase subfamily. As to quaternary structure, homodimer or homotetramer. Requires heme b as cofactor. Post-translationally, formation of the three residue Trp-Tyr-Met cross-link is important for the catalase, but not the peroxidase activity of the enzyme.

The catalysed reaction is H2O2 + AH2 = A + 2 H2O. The enzyme catalyses 2 H2O2 = O2 + 2 H2O. In terms of biological role, bifunctional enzyme with both catalase and broad-spectrum peroxidase activity. The polypeptide is Catalase-peroxidase (Hyphomonas neptunium (strain ATCC 15444)).